A 248-amino-acid polypeptide reads, in one-letter code: Ribosomal RNA small subunit methyltransferase J (248 aa).

Residues 97-98 (RD), 113-114 (ER), and D167 each bind S-adenosyl-L-methionine.

It belongs to the methyltransferase superfamily. RsmJ family.

It is found in the cytoplasm. It catalyses the reaction guanosine(1516) in 16S rRNA + S-adenosyl-L-methionine = N(2)-methylguanosine(1516) in 16S rRNA + S-adenosyl-L-homocysteine + H(+). Its function is as follows. Specifically methylates the guanosine in position 1516 of 16S rRNA. This chain is Ribosomal RNA small subunit methyltransferase J, found in Aeromonas hydrophila subsp. hydrophila (strain ATCC 7966 / DSM 30187 / BCRC 13018 / CCUG 14551 / JCM 1027 / KCTC 2358 / NCIMB 9240 / NCTC 8049).